The chain runs to 113 residues: Pancreatic progenitor cell differentiation and proliferation factor (113 aa).

It belongs to the PPDPF family.

Its function is as follows. Probable regulator of exocrine pancreas development. The sequence is that of Pancreatic progenitor cell differentiation and proliferation factor (ppdpf) from Xenopus tropicalis (Western clawed frog).